The primary structure comprises 126 residues: uncharacterized protein (126 aa).

The Extracellular segment spans residues 1 to 9; that stretch reads MCTYIITQS. The chain crosses the membrane as a helical span at residues 10-30; that stretch reads FFFLPCLSFLFFKLVGFFDSV. Residues 31 to 73 are Cytoplasmic-facing; the sequence is FTAGKSLRIMFELPIFDKLTSCFAAIDCSATSLDIPFAEEELF. The helical transmembrane segment at 74-94 threads the bilayer; the sequence is LMLVSEPVLIPFLFVFEFMLI. Residues 95-126 are Extracellular-facing; the sequence is CKPCGSRSRFGFPVKNVSDFEETLEFDPTLLV.

The protein localises to the membrane. This is an uncharacterized protein from Saccharomyces cerevisiae (strain ATCC 204508 / S288c) (Baker's yeast).